Reading from the N-terminus, the 421-residue chain is UPF0415 protein C7orf25 homolog (421 aa).

It belongs to the UPF0415 family.

This Rattus norvegicus (Rat) protein is UPF0415 protein C7orf25 homolog.